Here is a 448-residue protein sequence, read N- to C-terminus: T-box transcription factor T homolog 1 (448 aa).

The segment at residues 54 to 224 is a DNA-binding region (T-box); it reads LWDKFNALTN…YNPFAKAFLD (171 aa). 2 disordered regions span residues 290–312 and 401–448; these read APYPHPYQRSSPPTNYGHDTAAS and TTAS…PPSL. Residues 417–442 show a composition bias toward polar residues; it reads STDSGYGHSTTPPAPQTRITSNNWSP.

It is found in the nucleus. Involved in the transcriptional regulation of genes required for mesoderm formation and differentiation. The protein is T-box transcription factor T homolog 1 of Branchiostoma floridae (Florida lancelet).